Reading from the N-terminus, the 136-residue chain is MNRQELITEALKARDMAYAPYSKFQVGAALLTKDGKVYRGCNIENAAYSMCNCAERTALFKAVSEGDTEFQMLAVAADTPGPVSPCGACRQVISELCTKDVIVVLTNLQGQIKEMTVEELLPGAFSSEDLHDERKL.

The CMP/dCMP-type deaminase domain maps to 1 to 128 (MNRQELITEA…ELLPGAFSSE (128 aa)). Residue 42–44 (NIE) participates in substrate binding. Cys53 contacts Zn(2+). Glu55 serves as the catalytic Proton donor. Residues Cys86 and Cys89 each coordinate Zn(2+).

The protein belongs to the cytidine and deoxycytidylate deaminase family. As to quaternary structure, homotetramer. The cofactor is Zn(2+).

It catalyses the reaction cytidine + H2O + H(+) = uridine + NH4(+). It carries out the reaction 2'-deoxycytidine + H2O + H(+) = 2'-deoxyuridine + NH4(+). In terms of biological role, this enzyme scavenges exogenous and endogenous cytidine and 2'-deoxycytidine for UMP synthesis. This is Cytidine deaminase (cdd) from Bacillus subtilis (strain 168).